Here is a 2463-residue protein sequence, read N- to C-terminus: Protein TIC 214 (2463 aa).

The next 6 helical transmembrane spans lie at 18-38 (VGLY…LFLL), 60-80 (FFTG…HLAL), 86-106 (ILLL…SGQW), 127-147 (LVFL…GRPM), 170-190 (FVGW…VFVW), and 297-317 (LFSI…PLLY). Positions 326-441 (QLQRKLSNET…AARAMQEAYK (116 aa)) form a coiled coil. Disordered regions lie at residues 792-841 (AVPK…RKVN), 1230-1249 (SIQK…GPKK), 1393-1417 (SGGR…EQDF), 2116-2136 (EEEK…KLKK), and 2162-2187 (KQRA…RKVQ). Residues 794–830 (PKKKKKISKSKQKNVKSKQKNVKSKQKNVKSKQKNVK) show a composition bias toward basic residues. 3 stretches are compositionally biased toward basic and acidic residues: residues 832–841 (KQNEIKRKVN), 1231–1249 (IQKD…GPKK), and 1397–1417 (ETPE…EQDF). A coiled-coil region spans residues 2049–2192 (WDALVASLKQ…KRKVQVQENK (144 aa)). Residues 2124–2136 (KRKKERKKEKLKK) show a composition bias toward basic residues.

It belongs to the TIC214 family. Part of the Tic complex.

The protein resides in the plastid. The protein localises to the chloroplast inner membrane. Its function is as follows. Involved in protein precursor import into chloroplasts. May be part of an intermediate translocation complex acting as a protein-conducting channel at the inner envelope. In Oenothera elata subsp. hookeri (Hooker's evening primrose), this protein is Protein TIC 214.